Reading from the N-terminus, the 236-residue chain is 5'-methylthioadenosine/S-adenosylhomocysteine nucleosidase (236 aa).

Glutamate 12 serves as the catalytic Proton acceptor. Substrate contacts are provided by residues glycine 78, methionine 153, and 174 to 175; that span reads ME. Aspartate 198 functions as the Proton donor in the catalytic mechanism.

It belongs to the PNP/UDP phosphorylase family. MtnN subfamily.

The catalysed reaction is S-adenosyl-L-homocysteine + H2O = S-(5-deoxy-D-ribos-5-yl)-L-homocysteine + adenine. The enzyme catalyses S-methyl-5'-thioadenosine + H2O = 5-(methylsulfanyl)-D-ribose + adenine. It carries out the reaction 5'-deoxyadenosine + H2O = 5-deoxy-D-ribose + adenine. Its pathway is amino-acid biosynthesis; L-methionine biosynthesis via salvage pathway; S-methyl-5-thio-alpha-D-ribose 1-phosphate from S-methyl-5'-thioadenosine (hydrolase route): step 1/2. Catalyzes the irreversible cleavage of the glycosidic bond in both 5'-methylthioadenosine (MTA) and S-adenosylhomocysteine (SAH/AdoHcy) to adenine and the corresponding thioribose, 5'-methylthioribose and S-ribosylhomocysteine, respectively. Also cleaves 5'-deoxyadenosine, a toxic by-product of radical S-adenosylmethionine (SAM) enzymes, into 5-deoxyribose and adenine. The polypeptide is 5'-methylthioadenosine/S-adenosylhomocysteine nucleosidase (Geobacillus thermodenitrificans (strain NG80-2)).